Consider the following 485-residue polypeptide: Betaine aldehyde dehydrogenase (485 aa).

Residues T23, I24, and D90 each contribute to the K(+) site. Residue 147 to 149 (GAW) participates in NAD(+) binding. Catalysis depends on K159, which acts as the Charge relay system. Residues 173 to 176 (KPSE) and 226 to 229 (EVGT) contribute to the NAD(+) site. L241 contributes to the K(+) binding site. The active-site Proton acceptor is E247. Positions 249, 281, and 382 each coordinate NAD(+). The active-site Nucleophile is C281. The residue at position 281 (C281) is a Cysteine sulfenic acid (-SOH). Positions 452 and 455 each coordinate K(+). E459 functions as the Charge relay system in the catalytic mechanism.

The protein belongs to the aldehyde dehydrogenase family. In terms of assembly, dimer of dimers. K(+) is required as a cofactor.

It catalyses the reaction betaine aldehyde + NAD(+) + H2O = glycine betaine + NADH + 2 H(+). It participates in amine and polyamine biosynthesis; betaine biosynthesis via choline pathway; betaine from betaine aldehyde: step 1/1. Functionally, involved in the biosynthesis of the osmoprotectant glycine betaine. Catalyzes the irreversible oxidation of betaine aldehyde to the corresponding acid. The chain is Betaine aldehyde dehydrogenase from Marinomonas sp. (strain MWYL1).